Here is a 337-residue protein sequence, read N- to C-terminus: Casein kinase II subunit alpha (337 aa).

Residues 47-332 (YEIIRKIGRG…TREAMEHPYF (286 aa)) enclose the Protein kinase domain. ATP is bound by residues 53-61 (IGRGKYSEV) and Lys76. The Proton acceptor role is filled by Asp164.

Belongs to the protein kinase superfamily. CMGC Ser/Thr protein kinase family. CK2 subfamily. As to quaternary structure, tetramer of two alpha and two beta chains.

It carries out the reaction L-seryl-[protein] + ATP = O-phospho-L-seryl-[protein] + ADP + H(+). The catalysed reaction is L-threonyl-[protein] + ATP = O-phospho-L-threonyl-[protein] + ADP + H(+). Functionally, casein kinases are operationally defined by their preferential utilization of acidic proteins such as caseins as substrates. The alpha chain contains the catalytic site. The protein is Casein kinase II subunit alpha (casK) of Dictyostelium discoideum (Social amoeba).